The sequence spans 370 residues: Glycerophosphodiester phosphodiesterase GDPD3 (370 aa).

Residues 35 to 322 form the GP-PDE domain; sequence FVLMGHRGFG…DMVKDISEAI (288 aa).

The protein belongs to the glycerophosphoryl diester phosphodiesterase family. Expressed in flowers and siliques.

The enzyme catalyses a sn-glycero-3-phosphodiester + H2O = an alcohol + sn-glycerol 3-phosphate + H(+). In Arabidopsis thaliana (Mouse-ear cress), this protein is Glycerophosphodiester phosphodiesterase GDPD3.